The primary structure comprises 584 residues: tRNA-guanine(15) transglycosylase (584 aa).

The active-site Nucleophile is the Asp-95. Substrate-binding residues include Asp-130 and Gly-196. Zn(2+) contacts are provided by Cys-279, Cys-281, and Cys-284. A PUA domain is found at 507-582 (RMRVVVSEEA…RAVKVRRGIS (76 aa)).

Belongs to the archaeosine tRNA-ribosyltransferase family. Requires Zn(2+) as cofactor.

The catalysed reaction is guanosine(15) in tRNA + 7-cyano-7-deazaguanine = 7-cyano-7-carbaguanosine(15) in tRNA + guanine. Its pathway is tRNA modification; archaeosine-tRNA biosynthesis. Functionally, exchanges the guanine residue with 7-cyano-7-deazaguanine (preQ0) at position 15 in the dihydrouridine loop (D-loop) of archaeal tRNAs. The protein is tRNA-guanine(15) transglycosylase of Pyrococcus abyssi (strain GE5 / Orsay).